The primary structure comprises 330 residues: tRNA (cytosine(38)-C(5))-methyltransferase (330 aa).

The SAM-dependent MTase C5-type domain occupies 7-330 (LRVLELYSGI…ISLLLEPLNF (324 aa)). Cys-81 is an active-site residue.

It belongs to the class I-like SAM-binding methyltransferase superfamily. C5-methyltransferase family.

It localises to the cytoplasm. The protein resides in the nucleus. The catalysed reaction is cytidine(38) in tRNA + S-adenosyl-L-methionine = 5-methylcytidine(38) in tRNA + S-adenosyl-L-homocysteine + H(+). Specifically methylates cytosine 38 in the anticodon loop of tRNA(Asp). Can also methylate cytosine 38 in tRNA(Glu), albeit to a lower level, but not tRNA(Lys). Pmt1-dependent tRNA methylation is induced by nitrogen limitation and depends on the nutrient-sensing protein kinase sck2. Does not have DNA-methylation activity. The protein is tRNA (cytosine(38)-C(5))-methyltransferase (pmt1) of Schizosaccharomyces pombe (strain 972 / ATCC 24843) (Fission yeast).